A 397-amino-acid chain; its full sequence is Tryptophan synthase beta chain (397 aa).

Position 86 is an N6-(pyridoxal phosphate)lysine (Lys-86).

This sequence belongs to the TrpB family. As to quaternary structure, tetramer of two alpha and two beta chains. Pyridoxal 5'-phosphate is required as a cofactor.

It carries out the reaction (1S,2R)-1-C-(indol-3-yl)glycerol 3-phosphate + L-serine = D-glyceraldehyde 3-phosphate + L-tryptophan + H2O. The protein operates within amino-acid biosynthesis; L-tryptophan biosynthesis; L-tryptophan from chorismate: step 5/5. The beta subunit is responsible for the synthesis of L-tryptophan from indole and L-serine. In Buchnera aphidicola subsp. Diuraphis noxia, this protein is Tryptophan synthase beta chain (trpB).